The following is an 86-amino-acid chain: MAAAAATVTAVQPAASSCGKRDGDNACVVDMPRKAKKGRSPPEEEVEAFLAAAESSVARRFAAKYNYDIVKDAPMDGRYEWVRVRP.

Residues 1-15 (MAAAAATVTAVQPAA) show a composition bias toward low complexity. The tract at residues 1-23 (MAAAAATVTAVQPAASSCGKRDG) is disordered.

This sequence belongs to the CDI family. ICK/KRP subfamily.

This Oryza sativa subsp. japonica (Rice) protein is Cyclin-dependent kinase inhibitor 6 (KRP6).